A 96-amino-acid chain; its full sequence is Gastrolith matrix protein (96 aa).

9 repeat units span residues 11 to 15, 16 to 20, 21 to 25, 30 to 34, 35 to 39, 50 to 54, 55 to 59, 65 to 69, and 70 to 74. The 9 X 5 AA tandem repeat of G-S-X-X-F stretch occupies residues 11–74; sequence GSAGFGSTNF…GSTGFGSSSF (64 aa). A disordered region spans residues 75–96; that stretch reads GSTSGLPYLVVIPNNPAVGGLR.

Post-translationally, the N-terminus is blocked. In terms of tissue distribution, expressed in the gastroliths.

The protein resides in the secreted. In terms of biological role, associates with chitin and plays a role in calcification. The polypeptide is Gastrolith matrix protein (Procambarus clarkii (Red swamp crayfish)).